Consider the following 60-residue polypeptide: Waprin-Lio1 (60 aa).

The first 8 residues, 1 to 8 (MLLGTTSA), serve as a signal peptide directing secretion. The WAP domain occupies 9-59 (QVVRPGSCPNVDVPIPPLGLCRTTCQTDANCQEGRKCCKNGCGFMTCETAR). Cystine bridges form between Cys16–Cys46, Cys29–Cys50, Cys33–Cys45, and Cys39–Cys55.

This sequence belongs to the venom waprin family. As to expression, expressed by the venom gland.

It localises to the secreted. Damages membranes of susceptible bacteria. Has no hemolytic activity. Not toxic to mice. Does not inhibit the proteinases elastase and cathepsin G. The chain is Waprin-Lio1 from Erythrolamprus poecilogyrus (Water snake).